The primary structure comprises 302 residues: Putative peptide permease protein BMEII0861 (302 aa).

A disordered region spans residues 1-22 (MRSSIHASRLRKMGQSIPASTG). A run of 5 helical transmembrane segments spans residues 38–58 (IFGL…PLWL), 101–121 (LLVA…IGAI), 147–167 (IFLL…VVVI), 230–250 (ILLE…AASW), and 268–288 (WQWL…NFIG). An ABC transmembrane type-1 domain is found at 97–288 (GRISLLVAVS…LAVLAINFIG (192 aa)).

This sequence belongs to the binding-protein-dependent transport system permease family. The complex is composed of two ATP-binding proteins (BMEII0863 and BMEII0864), two transmembrane proteins (BMEII0860 and BMEII0861) and a solute-binding protein (BMEII0859).

The protein resides in the cell inner membrane. Probably part of an ABC transporter complex that could be involved in peptide import. Probably responsible for the translocation of the substrate across the membrane. The sequence is that of Putative peptide permease protein BMEII0861 from Brucella melitensis biotype 1 (strain ATCC 23456 / CCUG 17765 / NCTC 10094 / 16M).